The following is a 176-amino-acid chain: Glutathione-regulated potassium-efflux system ancillary protein KefF (176 aa).

FMN is bound by residues histidine 8, 14–17, 65–68, and 105–108; these read SHAN, MQWY, and TTGG.

Belongs to the NAD(P)H dehydrogenase (quinone) family. KefF subfamily. In terms of assembly, homodimer. Interacts with KefC. Requires FMN as cofactor.

The protein localises to the cell inner membrane. It carries out the reaction a quinone + NADH + H(+) = a quinol + NAD(+). The enzyme catalyses a quinone + NADPH + H(+) = a quinol + NADP(+). In terms of biological role, regulatory subunit of a potassium efflux system that confers protection against electrophiles. Required for full activity of KefC. Shows redox enzymatic activity, but this enzymatic activity is not required for activation of KefC. The chain is Glutathione-regulated potassium-efflux system ancillary protein KefF from Salmonella dublin (strain CT_02021853).